Reading from the N-terminus, the 203-residue chain is Large ribosomal subunit protein bL25 (203 aa).

This sequence belongs to the bacterial ribosomal protein bL25 family. CTC subfamily. Part of the 50S ribosomal subunit; part of the 5S rRNA/L5/L18/L25 subcomplex. Contacts the 5S rRNA. Binds to the 5S rRNA independently of L5 and L18.

This is one of the proteins that binds to the 5S RNA in the ribosome where it forms part of the central protuberance. The sequence is that of Large ribosomal subunit protein bL25 from Rickettsia rickettsii (strain Iowa).